The sequence spans 464 residues: Siroheme synthase (464 aa).

The interval 1–203 (MEFLPLFHNL…GQGAEAERLL (203 aa)) is precorrin-2 dehydrogenase /sirohydrochlorin ferrochelatase. NAD(+) contacts are provided by residues 22 to 23 (EI) and 43 to 44 (PE). The residue at position 128 (Ser-128) is a Phosphoserine. The uroporphyrinogen-III C-methyltransferase stretch occupies residues 216–464 (GEVYLVGAGP…AWFEGAQATL (249 aa)). An S-adenosyl-L-methionine-binding site is contributed by Pro-225. The active-site Proton acceptor is the Asp-248. The Proton donor role is filled by Lys-270. Residues 301 to 303 (GGD), Ile-306, 331 to 332 (TA), Met-383, and Gly-412 each bind S-adenosyl-L-methionine.

In the N-terminal section; belongs to the precorrin-2 dehydrogenase / sirohydrochlorin ferrochelatase family. This sequence in the C-terminal section; belongs to the precorrin methyltransferase family.

The enzyme catalyses uroporphyrinogen III + 2 S-adenosyl-L-methionine = precorrin-2 + 2 S-adenosyl-L-homocysteine + H(+). The catalysed reaction is precorrin-2 + NAD(+) = sirohydrochlorin + NADH + 2 H(+). It catalyses the reaction siroheme + 2 H(+) = sirohydrochlorin + Fe(2+). It functions in the pathway cofactor biosynthesis; adenosylcobalamin biosynthesis; precorrin-2 from uroporphyrinogen III: step 1/1. The protein operates within cofactor biosynthesis; adenosylcobalamin biosynthesis; sirohydrochlorin from precorrin-2: step 1/1. Its pathway is porphyrin-containing compound metabolism; siroheme biosynthesis; precorrin-2 from uroporphyrinogen III: step 1/1. It participates in porphyrin-containing compound metabolism; siroheme biosynthesis; siroheme from sirohydrochlorin: step 1/1. It functions in the pathway porphyrin-containing compound metabolism; siroheme biosynthesis; sirohydrochlorin from precorrin-2: step 1/1. Its function is as follows. Multifunctional enzyme that catalyzes the SAM-dependent methylations of uroporphyrinogen III at position C-2 and C-7 to form precorrin-2 via precorrin-1. Then it catalyzes the NAD-dependent ring dehydrogenation of precorrin-2 to yield sirohydrochlorin. Finally, it catalyzes the ferrochelation of sirohydrochlorin to yield siroheme. This is Siroheme synthase from Pseudomonas syringae pv. tomato (strain ATCC BAA-871 / DC3000).